A 103-amino-acid polypeptide reads, in one-letter code: MANQRIRIRLKAFDHRLIDQSTAEIVETAKRTGAQVRGPIPLPTRKERFTVLISPHVNKDARDQYEIRTHKRLIDIMDPTDKTVDALMRLDLAAGVDVQISLG.

It belongs to the universal ribosomal protein uS10 family. As to quaternary structure, part of the 30S ribosomal subunit.

Involved in the binding of tRNA to the ribosomes. This Idiomarina loihiensis (strain ATCC BAA-735 / DSM 15497 / L2-TR) protein is Small ribosomal subunit protein uS10.